A 190-amino-acid polypeptide reads, in one-letter code: Photosynthetic NDH subunit of lumenal location 2, chloroplastic (190 aa).

A chloroplast-targeting transit peptide spans 1-31 (MSSFTTTNTPPPYLLRKIYHRRVNQPFSVVC). A thylakoid-targeting transit peptide spans 32–68 (CTGEPQQDIFTRRRTLTSLITFTVIGGATSSALAQEK). 2 coiled-coil regions span residues 87 to 107 (EDAA…REML) and 139 to 159 (ESRR…MSEL).

The protein belongs to the PsbQ family. As to quaternary structure, part of the chloroplast NDH complex, composed of a mixture of chloroplast and nucleus encoded subunits. Component of the NDH lumenal subcomplex, at least composed of PnsL1, PnsL2, PnsL3, PnsL4 and PnsL5.

Its subcellular location is the plastid. The protein resides in the chloroplast thylakoid membrane. Its function is as follows. NDH shuttles electrons from NAD(P)H:plastoquinone, via FMN and iron-sulfur (Fe-S) centers, to quinones in the photosynthetic chain and possibly in a chloroplast respiratory chain. The immediate electron acceptor for the enzyme in this species is believed to be plastoquinone. Couples the redox reaction to proton translocation, and thus conserves the redox energy in a proton gradient. Required for both formation and activity of the chloroplast NAD(P)H dehydrogenase (NDH) complex. This Arabidopsis thaliana (Mouse-ear cress) protein is Photosynthetic NDH subunit of lumenal location 2, chloroplastic.